Consider the following 198-residue polypeptide: Zinc finger protein 41 (198 aa).

A compositionally biased stretch (basic residues) spans 1-12 (MEKPATRKKKSQ). Residues 1-56 (MEKPATRKKKSQAPKEEAGAQKATVKGEKTSKGKKATKKPRKPRRPRKEPVLSPED) form a disordered region. Residues 13–31 (APKEEAGAQKATVKGEKTS) are compositionally biased toward basic and acidic residues. A compositionally biased stretch (basic residues) spans 32–47 (KGKKATKKPRKPRRPR). 4 C2H2-type zinc fingers span residues 87-109 (YECGECGRIFKHKTDHIRHQRVH), 115-137 (FKCDQCGKTFRHSSDVTKHQRIH), 143-165 (FKCGECGKAFNCGSNLLKHQKTH), and 171-193 (YGCEECGKSFAYSSCLIRHRKRH).

Belongs to the krueppel C2H2-type zinc-finger protein family. As to expression, predominantly in the spermatocytes and spermatids of testes. It is also expressed in the fetus and embryonic stem cells at lower levels.

The protein resides in the nucleus. A putative DNA-binding regulatory protein associated with meiosis in spermatogenesis. This Mus musculus (Mouse) protein is Zinc finger protein 41 (Zfp41).